Consider the following 343-residue polypeptide: N-malonyltransferase FDB2 (343 aa).

C107 functions as the Acyl-thioester intermediate in the catalytic mechanism. Catalysis depends on H155, which acts as the Proton acceptor. Residue D170 is part of the active site.

It belongs to the arylamine N-acetyltransferase family.

Its pathway is xenobiotic degradation. Its function is as follows. N-malonyltransferase; part of the Fusarium detoxification of benzoxazolinone cluster involved in the degradation of benzoxazolinones produced by the host plant. Maize, wheat, and rye produce the 2 benzoxazinone phytoanticipins 2,4-dihy-droxy-7-methoxy-1,4-benzoxazin-3-one (DIMBOA) and 2,4-dihydroxy-1,4-benzoxazin-3-one (DIBOA) that, due to their inherent instability once released, spontaneously degrade to the more stable corresponding benzoxazolinones, 6-methoxy-2-benzoxazolinone (MBOA) and 2-benzoxazolinone (BOA), respectively. The first step in the detoxification of benzoxazolinones involves the hydrolysis of the cyclic ester bond of benzoxazolinones by the gamma-lactamase FDB1 to aminophenols. FDB1 is able to convert BOA into 2-aminophenol (2-AP), as well as MBOA into 5-methoxy-2-aminophenol (2-AMP). The N-malonyltransferase FDB2 then metabolizes aminophenols via N-malonylation to non-toxic malonamic acids. FDB2 converts 2-AP into N-(2-hydroxyphenyl) malonamic acid (HPMA) and 2-AMP into N-(2-hydroxy-4-methoxyphenyl) malonamic acid (HMPMA). The cluster also contains 2 transcription factors (FDB3 and FPSE_08121), an aldo-keto reductase (FPSE_08125) that possibly associates with a ketone component of BOA and MBOA degradation, an esterase (FPSE_08126), an acyl-CoA transferase (FPSE_08120), a solute carrier protein (FPSE_08119) and a transmembrane transporter (FPSE_08127) proposed to shuttle metabolites of benzoxazolinone degradation. This Fusarium pseudograminearum (strain CS3096) (Wheat and barley crown-rot fungus) protein is N-malonyltransferase FDB2.